Consider the following 581-residue polypeptide: Urease subunit alpha (581 aa).

Residues 134-581 enclose the Urease domain; the sequence is GGFDSHIHFI…LPMTQRYFLF (448 aa). Ni(2+)-binding residues include H139, H141, and K222. K222 carries the N6-carboxylysine modification. H224 is a substrate binding site. Ni(2+)-binding residues include H251 and H277. H325 acts as the Proton donor in catalysis. D365 serves as a coordination point for Ni(2+).

The protein belongs to the metallo-dependent hydrolases superfamily. Urease alpha subunit family. In terms of assembly, heterotrimer of UreA (gamma), UreB (beta) and UreC (alpha) subunits. Three heterotrimers associate to form the active enzyme. It depends on Ni cation as a cofactor. In terms of processing, carboxylation allows a single lysine to coordinate two nickel ions.

It is found in the cytoplasm. It carries out the reaction urea + 2 H2O + H(+) = hydrogencarbonate + 2 NH4(+). Its pathway is nitrogen metabolism; urea degradation; CO(2) and NH(3) from urea (urease route): step 1/1. The chain is Urease subunit alpha from Albidiferax ferrireducens (strain ATCC BAA-621 / DSM 15236 / T118) (Rhodoferax ferrireducens).